Consider the following 418-residue polypeptide: L-methionine/branched-chain amino acid exporter YjeH (418 aa).

Over 1 to 15 the chain is Periplasmic; that stretch reads MSGLKQELGLAQGIG. The chain crosses the membrane as a helical span at residues 16–36; that stretch reads LLSTSLLGTGVFAVPALAALV. At 37-41 the chain is on the cytoplasmic side; it reads AGNNS. The chain crosses the membrane as a helical span at residues 42–62; it reads LWAWPVLIILVFPIAIVFAIL. At 63-89 the chain is on the periplasmic side; sequence GRHYPSAGGVAHFVGMAFGSRLERVTG. The helical transmembrane segment at 90–110 threads the bilayer; the sequence is WLFLSVIPVGLPAALQIAAGF. Topologically, residues 111–113 are cytoplasmic; that stretch reads GQA. Residues 114 to 134 traverse the membrane as a helical segment; sequence MFGWHSWQLLLAELGTLALVW. The Periplasmic portion of the chain corresponds to 135 to 147; sequence YIGTRGASSSANL. Residues 148–168 form a helical membrane-spanning segment; sequence QTVIAGLIVALIVAIWWAGDI. At 169 to 182 the chain is on the cytoplasmic side; it reads KPANIPFPAPGNIE. Residues 183 to 203 traverse the membrane as a helical segment; the sequence is LTGLFAALSVMFWCFVGLEAF. Topologically, residues 204–219 are periplasmic; the sequence is AHLASEFKNPERDFPR. The helical transmembrane segment at 220-240 threads the bilayer; it reads ALMIGLLLAGLVYWGCTVVVL. Residues 241-257 are Cytoplasmic-facing; sequence HFDAYGEKMAAAASLPK. Residues 258-278 form a helical membrane-spanning segment; that stretch reads IVVQLFGVGALWIACVIGYLA. The Periplasmic portion of the chain corresponds to 279-317; sequence CFASLNIYIQSFARLVWSQAQHNPDHYLARLSSRHIPNN. Residues 318-338 traverse the membrane as a helical segment; the sequence is ALNAVLGCCVVSTLVIHALEI. The Cytoplasmic portion of the chain corresponds to 339 to 341; the sequence is NLD. Residues 342–362 form a helical membrane-spanning segment; sequence ALIIYANGIFIMIYLLCMLAG. Residues 363–378 are Periplasmic-facing; that stretch reads CKLLQGRYRLLAVVGG. A helical transmembrane segment spans residues 379-399; it reads LLCVLLLAMVGWKSLYALIML. Topologically, residues 400–418 are cytoplasmic; sequence AGLWLLLPKRKTPENGITT.

This sequence belongs to the amino acid-polyamine-organocation (APC) superfamily. Amino acid efflux (AAE) (TC 2.A.3.13) family.

It is found in the cell inner membrane. It catalyses the reaction L-methionine(in) + H(+)(out) = L-methionine(out) + H(+)(in). The catalysed reaction is L-leucine(in) + H(+)(out) = L-leucine(out) + H(+)(in). It carries out the reaction L-isoleucine(in) + H(+)(out) = L-isoleucine(out) + H(+)(in). The enzyme catalyses L-valine(in) + H(+)(out) = L-valine(out) + H(+)(in). With respect to regulation, efflux of L-methionine is inhibited by the proton ionophore carbonyl cyanide m-chlorophenylhydrazone (CCCP). Its function is as follows. Catalyzes the efflux of L-methionine, L-leucine, L-isoleucine and L-valine. Activity is dependent on electrochemical potential. In Escherichia coli (strain K12), this protein is L-methionine/branched-chain amino acid exporter YjeH (yjeH).